Reading from the N-terminus, the 110-residue chain is UPF0060 membrane protein Psyc_0916 (110 aa).

The next 4 helical transmembrane spans lie at V7–W27, S33–L53, A63–I83, and T87–P107.

The protein belongs to the UPF0060 family.

It is found in the cell inner membrane. The chain is UPF0060 membrane protein Psyc_0916 from Psychrobacter arcticus (strain DSM 17307 / VKM B-2377 / 273-4).